We begin with the raw amino-acid sequence, 367 residues long: Glutamate 5-kinase (367 aa).

ATP is bound at residue Lys17. Ser57, Asp144, and Asn156 together coordinate substrate. Residues 176–177 (SD) and 217–223 (TGGMTSK) contribute to the ATP site. A PUA domain is found at 279–357 (AGALTLDEGA…SELPGELRRP (79 aa)).

It belongs to the glutamate 5-kinase family.

The protein resides in the cytoplasm. It carries out the reaction L-glutamate + ATP = L-glutamyl 5-phosphate + ADP. The protein operates within amino-acid biosynthesis; L-proline biosynthesis; L-glutamate 5-semialdehyde from L-glutamate: step 1/2. Functionally, catalyzes the transfer of a phosphate group to glutamate to form L-glutamate 5-phosphate. This chain is Glutamate 5-kinase, found in Mycolicibacterium paratuberculosis (strain ATCC BAA-968 / K-10) (Mycobacterium paratuberculosis).